Reading from the N-terminus, the 349-residue chain is MSNLSGKVQTVLGPVDPEQLGKTLTHEHLTMSFECCYHPPPAGDEAVAESPFQMQHMYWLRQNPYSCHENLLLLQETLAVREELLAYRKAGGGAVVENTTTGIQRDLPTLRQLSKDTGVHIIAGAGYYVDCTHTEDTRRMSVEKLSDVIVSEVLHGADGTDIRCGVIGEIGTCWPITDSERKVLKATAHAQSQLGCPVIIHPGRNPAAPAEVVRILQEAGGDISKTVMSHLDRTIFDEGELLEFAKLGSYLEYDLFGMEMLNYPYNSEVDMPSDSQRVKALAFLVKEGYEDKIVVAHDIHTKNRLTKFGGHGYSHILKNIVPKMLRRGISQRQVDKILVDNPKEWLTFK.

A divalent metal cation contacts are provided by H26, H28, E169, H201, H230, and D298.

Belongs to the metallo-dependent hydrolases superfamily. Phosphotriesterase family. The cofactor is a divalent metal cation.

The protein resides in the cytoplasm. The protein localises to the cytosol. The enzyme catalyses N-acetyltaurine + H2O = taurine + acetate. It carries out the reaction N-propanoyltaurine + H2O = propanoate + taurine. It catalyses the reaction N-acetyl-L-methionine + H2O = L-methionine + acetate. The catalysed reaction is N-acetyl-L-isoleucine + H2O = L-isoleucine + acetate. The enzyme catalyses N-acetyl-L-leucine + H2O = L-leucine + acetate. It carries out the reaction N-acetyl-L-valine + H2O = L-valine + acetate. Functionally, N-acetyltaurine hydrolase that catalyzes the hydrolysis of N-acetyltaurine into taurine and acetate. PTER also acts on other N-acetyl amino acids (Met, Ile, Leu, Val) and N-propionyltaurine, but at lower rates. The protein is N-acetyltaurine hydrolase (pter) of Tetraodon nigroviridis (Spotted green pufferfish).